Here is a 309-residue protein sequence, read N- to C-terminus: Homoserine kinase (309 aa).

Residue 91-101 (PIGSGLGSSAC) coordinates ATP.

It belongs to the GHMP kinase family. Homoserine kinase subfamily.

Its subcellular location is the cytoplasm. It carries out the reaction L-homoserine + ATP = O-phospho-L-homoserine + ADP + H(+). It functions in the pathway amino-acid biosynthesis; L-threonine biosynthesis; L-threonine from L-aspartate: step 4/5. In terms of biological role, catalyzes the ATP-dependent phosphorylation of L-homoserine to L-homoserine phosphate. The protein is Homoserine kinase of Pectobacterium atrosepticum (strain SCRI 1043 / ATCC BAA-672) (Erwinia carotovora subsp. atroseptica).